We begin with the raw amino-acid sequence, 747 residues long: ATPase family gene 2 protein homolog B (747 aa).

At Met1 the chain carries N-acetylmethionine. ATP contacts are provided by residues 234–241 (GPPGVGKT) and 500–507 (GPPGCAKT).

This sequence belongs to the AAA ATPase family. AFG2 subfamily. Part of the 55LCC heterohexameric ATPase complex composed at least of AIRIM, AFG2A, AFG2B and CINP. Associates with pre-60S ribosomal particles. As to expression, expressed in neurons; also expressed at lower level in astrocytes, oligodendrocytes and microglia.

The protein localises to the cytoplasm. It localises to the cytoskeleton. It is found in the spindle. Its subcellular location is the nucleus. It catalyses the reaction ATP + H2O = ADP + phosphate + H(+). With respect to regulation, in the context of 55LCC heterohexameric ATPase complex, the ATPase activity is stimulated by DNA binding and inhibited in presence of RNA. ATP-dependent chaperone part of the 55LCC heterohexameric ATPase complex which is chromatin-associated and promotes replisome proteostasis to maintain replication fork progression and genome stability. Required for replication fork progression, sister chromatid cohesion, and chromosome stability. The ATPase activity is specifically enhanced by replication fork DNA and is coupled to cysteine protease-dependent cleavage of replisome substrates in response to replication fork damage. Uses ATPase activity to process replisome substrates in S-phase, facilitating their proteolytic turnover from chromatin to ensure DNA replication and mitotic fidelity. Plays an essential role in the cytoplasmic maturation steps of pre-60S ribosomal particles by promoting the release of shuttling protein RSL24D1/RLP24 from the pre-ribosomal particles. This Rattus norvegicus (Rat) protein is ATPase family gene 2 protein homolog B (Afg2b).